Reading from the N-terminus, the 1202-residue chain is Inner capsid protein VP3 (1202 aa).

2 disordered regions span residues 1–45 and 73–99; these read MRPI…SGKI and YTSK…PRVT. The segment covering 10–21 has biased composition (basic and acidic residues); the sequence is NQERTTTKHQET. Over residues 27–45 the composition is skewed to polar residues; the sequence is NEQTTSDQRFTRSSNSGKI.

It belongs to the turreted BTV-fold inner capsid family. Homodecamer; each decamer is made up of two conformers of VP2, called VP2A and VP2B. 12 homodecamers assemble to form an icosahedral capsid.

The protein resides in the virion. Inner capsid protein that self-assembles to form an icosahedral capsid with a T=2 symmetry, which consists of 120 copies of VP2, with channels at each of its five-fold vertices. This capsid constitutes the innermost concentric layer of the viral mature particle. The sequence is that of Inner capsid protein VP3 (S3) from Aedes pseudoscutellaris reovirus (isolate France) (ApRV).